Reading from the N-terminus, the 269-residue chain is 4-hydroxy-tetrahydrodipicolinate reductase (269 aa).

Residues 10-15 (GANGRM), E36, 99-101 (GTT), and 123-126 (AANF) contribute to the NAD(+) site. H156 acts as the Proton donor/acceptor in catalysis. H157 contacts (S)-2,3,4,5-tetrahydrodipicolinate. K160 serves as the catalytic Proton donor. 166–167 (GT) lines the (S)-2,3,4,5-tetrahydrodipicolinate pocket.

This sequence belongs to the DapB family.

The protein resides in the cytoplasm. The enzyme catalyses (S)-2,3,4,5-tetrahydrodipicolinate + NAD(+) + H2O = (2S,4S)-4-hydroxy-2,3,4,5-tetrahydrodipicolinate + NADH + H(+). The catalysed reaction is (S)-2,3,4,5-tetrahydrodipicolinate + NADP(+) + H2O = (2S,4S)-4-hydroxy-2,3,4,5-tetrahydrodipicolinate + NADPH + H(+). Its pathway is amino-acid biosynthesis; L-lysine biosynthesis via DAP pathway; (S)-tetrahydrodipicolinate from L-aspartate: step 4/4. In terms of biological role, catalyzes the conversion of 4-hydroxy-tetrahydrodipicolinate (HTPA) to tetrahydrodipicolinate. This Neisseria gonorrhoeae (strain ATCC 700825 / FA 1090) protein is 4-hydroxy-tetrahydrodipicolinate reductase.